The primary structure comprises 327 residues: Transaldolase (327 aa).

K132 serves as the catalytic Schiff-base intermediate with substrate.

It belongs to the transaldolase family. Type 1 subfamily.

The protein localises to the cytoplasm. The catalysed reaction is D-sedoheptulose 7-phosphate + D-glyceraldehyde 3-phosphate = D-erythrose 4-phosphate + beta-D-fructose 6-phosphate. The protein operates within carbohydrate degradation; pentose phosphate pathway; D-glyceraldehyde 3-phosphate and beta-D-fructose 6-phosphate from D-ribose 5-phosphate and D-xylulose 5-phosphate (non-oxidative stage): step 2/3. Transaldolase is important for the balance of metabolites in the pentose-phosphate pathway. This chain is Transaldolase, found in Chlamydia pneumoniae (Chlamydophila pneumoniae).